A 236-amino-acid chain; its full sequence is MSNQLIYSGKAKDIYETADDEIVLISYKDQVTMLNGAHKEMIEGKGSLNNQISALIFDRLNRVGVSTHFIKQLSETEQLNKRVAIIPLEVVLRNVAAGSFSKRFGVKEGQALDEPIIELYYKNDALDDPFINDEHVSFLKLATDEQIAYIKQETHRINAYLKEWFASVGLTLVDFKLEFGFDKEGMLILADEFSPDNCRLWDNAGRHMDKDVFRRQLGSLTQAYETVLERLRALDQ.

Belongs to the SAICAR synthetase family.

The enzyme catalyses 5-amino-1-(5-phospho-D-ribosyl)imidazole-4-carboxylate + L-aspartate + ATP = (2S)-2-[5-amino-1-(5-phospho-beta-D-ribosyl)imidazole-4-carboxamido]succinate + ADP + phosphate + 2 H(+). Its pathway is purine metabolism; IMP biosynthesis via de novo pathway; 5-amino-1-(5-phospho-D-ribosyl)imidazole-4-carboxamide from 5-amino-1-(5-phospho-D-ribosyl)imidazole-4-carboxylate: step 1/2. This Streptococcus equi subsp. zooepidemicus (strain H70) protein is Phosphoribosylaminoimidazole-succinocarboxamide synthase.